We begin with the raw amino-acid sequence, 428 residues long: Tyrosine--tRNA ligase (428 aa).

Y41 contacts L-tyrosine. A 'HIGH' region motif is present at residues 46 to 55 (PTADSLHLGH). Residue K148 is modified to N6-acetyllysine. L-tyrosine is bound by residues Y179 and Q183. Residues 239 to 243 (KFGKT) carry the 'KMSKS' region motif. ATP is bound at residue K242. The S4 RNA-binding domain occupies 361 to 418 (ADLMQALVDSELQPSRGQARKTIASNAITINGEKQSDPEYFFKEEDRLFGRFTLLRRG).

It belongs to the class-I aminoacyl-tRNA synthetase family. TyrS type 1 subfamily. As to quaternary structure, homodimer.

It localises to the cytoplasm. It carries out the reaction tRNA(Tyr) + L-tyrosine + ATP = L-tyrosyl-tRNA(Tyr) + AMP + diphosphate + H(+). Its function is as follows. Catalyzes the attachment of tyrosine to tRNA(Tyr) in a two-step reaction: tyrosine is first activated by ATP to form Tyr-AMP and then transferred to the acceptor end of tRNA(Tyr). In Escherichia coli O1:K1 / APEC, this protein is Tyrosine--tRNA ligase.